A 407-amino-acid polypeptide reads, in one-letter code: Argininosuccinate synthase (407 aa).

Residues 12 to 20 (AFSGGLDTS) and A39 each bind ATP. The L-citrulline site is built by Y90 and S95. G120 contacts ATP. Residues T122, N126, and D127 each contribute to the L-aspartate site. Residue N126 coordinates L-citrulline. Residues R130, S181, S190, E266, and Y278 each coordinate L-citrulline.

Belongs to the argininosuccinate synthase family. Type 1 subfamily. In terms of assembly, homotetramer.

Its subcellular location is the cytoplasm. The enzyme catalyses L-citrulline + L-aspartate + ATP = 2-(N(omega)-L-arginino)succinate + AMP + diphosphate + H(+). It participates in amino-acid biosynthesis; L-arginine biosynthesis; L-arginine from L-ornithine and carbamoyl phosphate: step 2/3. This Nitrosospira multiformis (strain ATCC 25196 / NCIMB 11849 / C 71) protein is Argininosuccinate synthase.